A 566-amino-acid polypeptide reads, in one-letter code: Transcription factor atf1 (566 aa).

The span at 1–42 shows a compositional bias: polar residues; sequence MSPSPVNTSTEPASVAAVSNGNATASSTQVPENNQSDSFAPP. Disordered regions lie at residues 1–83, 96–117, 315–345, and 357–479; these read MSPS…FVGS, SFGSTASVGQGNPSLNRNPSLS, QQQTFPDSIRPSFTQNTNPQAVTGTMNPQAS, and SQQF…KSFL. The span at 43–53 shows a compositional bias: low complexity; the sequence is SNNSQQNQQSS. 2 stretches are compositionally biased toward polar residues: residues 65–76 and 97–106; these read ANANPADQSDGV and FGSTASVGQG. The segment covering 107-117 has biased composition (low complexity); it reads NPSLNRNPSLS. 2 stretches are compositionally biased toward polar residues: residues 379 to 412 and 421 to 460; these read TLRQTTDFSGQNAENGSTNLPQKTSNSDMPTANS and TDYSTSQEPSSNANNQSSPTSSINGKASSESANGTSYSKG. Positions 466–479 are enriched in basic and acidic residues; sequence SKNETDEEKRKSFL. The region spanning 472–535 is the bZIP domain; the sequence is EEKRKSFLER…VSLKTLLIAH (64 aa). Residues 474–503 form a basic motif region; the sequence is KRKSFLERNRQAALKCRQRKKQWLSNLQAK. The segment at 514–528 is leucine-zipper; the sequence is LSAQVSALREEIVSL.

This sequence belongs to the bZIP family. Heterodimer of pcr1/mts2 and atf1/mts1. Post-translationally, phosphorylated by sty1/spc1.

The protein localises to the nucleus. Functionally, transcription factor required for sexual development and entry into stationary phase. Binds and activates CRE sites (cAMP-response elements, also known as M26 meiotic recombination hotspots). This Schizosaccharomyces pombe (strain 972 / ATCC 24843) (Fission yeast) protein is Transcription factor atf1 (atf1).